A 400-amino-acid chain; its full sequence is tRNA-specific 2-thiouridylase MnmA (400 aa).

ATP-binding positions include 19 to 26 (AMSGGVDS) and L45. C113 acts as the Nucleophile in catalysis. C113 and C210 form a disulfide bridge. Position 137 (G137) interacts with ATP. Residues 160 to 162 (RDQ) are interaction with tRNA. C210 acts as the Cysteine persulfide intermediate in catalysis.

This sequence belongs to the MnmA/TRMU family.

Its subcellular location is the cytoplasm. The enzyme catalyses S-sulfanyl-L-cysteinyl-[protein] + uridine(34) in tRNA + AH2 + ATP = 2-thiouridine(34) in tRNA + L-cysteinyl-[protein] + A + AMP + diphosphate + H(+). Functionally, catalyzes the 2-thiolation of uridine at the wobble position (U34) of tRNA, leading to the formation of s(2)U34. The chain is tRNA-specific 2-thiouridylase MnmA from Nitrobacter hamburgensis (strain DSM 10229 / NCIMB 13809 / X14).